We begin with the raw amino-acid sequence, 510 residues long: ATP synthase subunit alpha (510 aa).

An ATP-binding site is contributed by 169–176 (GDRQTGKT).

This sequence belongs to the ATPase alpha/beta chains family. As to quaternary structure, F-type ATPases have 2 components, CF(1) - the catalytic core - and CF(0) - the membrane proton channel. CF(1) has five subunits: alpha(3), beta(3), gamma(1), delta(1), epsilon(1). CF(0) has three main subunits: a(1), b(2) and c(9-12). The alpha and beta chains form an alternating ring which encloses part of the gamma chain. CF(1) is attached to CF(0) by a central stalk formed by the gamma and epsilon chains, while a peripheral stalk is formed by the delta and b chains.

It localises to the cell inner membrane. It catalyses the reaction ATP + H2O + 4 H(+)(in) = ADP + phosphate + 5 H(+)(out). Functionally, produces ATP from ADP in the presence of a proton gradient across the membrane. The alpha chain is a regulatory subunit. This chain is ATP synthase subunit alpha, found in Anaeromyxobacter sp. (strain K).